A 253-amino-acid polypeptide reads, in one-letter code: Phosphoglycerate mutase 2 (253 aa).

Thr3 carries the post-translational modification Phosphothreonine. Residues 10–17 (RHGESSWN), 23–24 (CG), Arg62, 89–92 (ERHY), Lys100, and 116–117 (RR) contribute to the substrate site. The active-site Tele-phosphohistidine intermediate is the His11. 2 positions are modified to phosphoserine: Ser14 and Ser15. Catalysis depends on Glu89, which acts as the Proton donor/acceptor. Ser118 carries the phosphoserine modification. Residue Thr121 is modified to Phosphothreonine. Tyr132 and Tyr133 each carry phosphotyrosine. Ser135 is subject to Phosphoserine. Thr152 carries the post-translational modification Phosphothreonine. 187-188 (GN) contacts substrate.

The protein belongs to the phosphoglycerate mutase family. BPG-dependent PGAM subfamily. Homodimer. Interacts with ENO1.

The enzyme catalyses (2R)-2-phosphoglycerate = (2R)-3-phosphoglycerate. It carries out the reaction (2R)-3-phospho-glyceroyl phosphate = (2R)-2,3-bisphosphoglycerate + H(+). In terms of biological role, interconversion of 3- and 2-phosphoglycerate with 2,3-bisphosphoglycerate as the primer of the reaction. Can also catalyze the reaction of EC 5.4.2.4 (synthase), but with a reduced activity. The sequence is that of Phosphoglycerate mutase 2 (Pgam2) from Rattus norvegicus (Rat).